Here is a 313-residue protein sequence, read N- to C-terminus: MKEKIVIALGGNAIQTTEATAEAQQTAIRCAMQNLKPLFDSPARIVISHGNGPQIGSLLIQQAKSNSDTTPAMPLDTCGAMSQGMIGYWLETEINRILTEMNSDRTVGTIVTRVEVDKDDPRFDNPTKPIGPFYTKEEVEELQKEQPDSVFKEDAGRGYRKVVASPLPQSILEHQLIRTLADGKNIVIACGGGGIPVIKKENTYEGVEAVIDKDFASEKLATLIEADTLMILTNVENVFINFNEPNQQQIDDIDVATLKKYAAQGKFVEGSMLPKIEAAIRFVESGENKKVIITNLEQAYEALIGNKGTHIHM.

This sequence belongs to the carbamate kinase family.

The protein localises to the cytoplasm. The catalysed reaction is hydrogencarbonate + NH4(+) + ATP = carbamoyl phosphate + ADP + H2O + H(+). Its pathway is metabolic intermediate metabolism; carbamoyl phosphate degradation; CO(2) and NH(3) from carbamoyl phosphate: step 1/1. This chain is Carbamate kinase 2 (arcC2), found in Staphylococcus aureus (strain USA300).